The chain runs to 285 residues: 4,4'-diapophytoene synthase (285 aa).

(2E,6E)-farnesyl diphosphate-binding positions include Tyr18 to Ser21, Tyr41, and Arg45. Asp48 and Asp52 together coordinate Mg(2+). Position 163 (Gln163) interacts with (2E,6E)-farnesyl diphosphate. Asn166 contributes to the Mg(2+) binding site. Arg169 lines the (2E,6E)-farnesyl diphosphate pocket. Asp170 is a binding site for Mg(2+). (2E,6E)-farnesyl diphosphate is bound at residue Tyr247.

This sequence belongs to the phytoene/squalene synthase family. CrtM subfamily. Requires Mg(2+) as cofactor.

The catalysed reaction is 2 (2E,6E)-farnesyl diphosphate = 15-cis-4,4'-diapophytoene + 2 diphosphate. The protein operates within carotenoid biosynthesis; staphyloxanthin biosynthesis; staphyloxanthin from farnesyl diphosphate: step 1/5. Functionally, involved in the biosynthesis of the yellow-orange carotenoid staphyloxanthin, which plays a role in the virulence via its protective function against oxidative stress. Catalyzes the head-to-head condensation of two molecules of farnesyl diphosphate (FPP) into the colorless C(30) carotenoid 4,4'-diapophytoene (dehydrosqualene). This Staphylococcus haemolyticus (strain JCSC1435) protein is 4,4'-diapophytoene synthase (crtM).